Reading from the N-terminus, the 749-residue chain is MATIKQIQFKRTKVAGSRPTAAQLAEGELAINLKDRTIFTKDDLNQIIDLGFAKGGEVSGDITQIGNYTQTGNYNLTGDATISGKTTTSTLDVGSVSDLRQTNFRPVLSTTTGSNFIISNSGGLIKPITLTVEGTATSSNTILRHSVDTTVAASGFIDSINVSLNPTDGALVTALNGTVNIGSSLKTPKLSVSGAETALGDYSISIGDNDTGFKWNSDGVFSLVTDSNSIYTYSRDRTYSNRPTNFRYTSDFDATTPALAPPGTWLASVETAIDGNAYGDGMSYLGYKDTAGYSFYFRGGGTFNVASKGGFNVDTAAAFAKTVDVSDILTCSSIIKAKGPGQVDVTSAGNIALGGTIQWVPSYMSGSPNRARDTIATAAWGDADQRINVLETSDPHGWWYYIQRAGSGSSSPTGIEGRVNGSWQASDLISDNTLRVAGAFTCTRRNSAGWGDNAGWYAGATPVVANQGNVQEMDPGVGGFYPGFAQYNYNGTGWNQAFVLGLLGQGVQRWRRGVLALRGDGPVDAGQQIARWYFSQEDGSLESEGPLKAPSVQAGQITSFGVNVTNALGSASIAIGDNDTGLRWGGDGIVQIVANNAIVGGWNSTDIFTEAGKHITSNGNLNQWGGGAIYCRDLNVSSDRRIKKDIKAFENPVDILSTIGGYTYLIEKGFNEDGSQAYEESAGLIAQEVEAVLPRLVKISNDGTKDVKRLNYNGITALNTAAINVHTKEINELKKQLKELKDIVKFLTK.

The tract at residues 633 to 636 (DLNV) is interaction with the receptor-recognizing protein gp38. Residues 638-737 (SDRRIKKDIK…KEINELKKQL (100 aa)) form the Peptidase S74 domain. Residues 720-749 (TAAINVHTKEINELKKQLKELKDIVKFLTK) adopt a coiled-coil conformation.

The protein belongs to the S16-like long tail fiber protein Gp37 family. As to quaternary structure, homotrimer. Interacts with the receptor-recognizing protein Gp38. Proteolytic cleavage and release of the chaperone in the host cytosol stabilizes the folded protein.

It localises to the virion. Constitues the trimeric tip of the long tail fiber that mediates the attachment to the host OmpC receptor and lipopolysaccharides, together with the receptor-recognizing protein Gp38. In terms of biological role, the C-terminal chaperone protein mediates homotrimerization and proper folding of the catalytic trimer. This Salmonella phage S16 (Salmonella phage vB_SenM-S16) protein is Long tail fiber protein Gp37.